An 80-amino-acid polypeptide reads, in one-letter code: MDNDEIFSKVRSIISEQLDKKEDEITTDSRFVEDLNADSLDIYELLYLLEEAFDDKIPENEANEFETVGDVVNFIKKRKG.

The 76-residue stretch at 4 to 79 (DEIFSKVRSI…DVVNFIKKRK (76 aa)) folds into the Carrier domain. The residue at position 39 (S39) is an O-(pantetheine 4'-phosphoryl)serine.

This sequence belongs to the acyl carrier protein (ACP) family. 4'-phosphopantetheine is transferred from CoA to a specific serine of apo-ACP by AcpS. This modification is essential for activity because fatty acids are bound in thioester linkage to the sulfhydryl of the prosthetic group.

It localises to the cytoplasm. It functions in the pathway lipid metabolism; fatty acid biosynthesis. Carrier of the growing fatty acid chain in fatty acid biosynthesis. The protein is Acyl carrier protein of Borreliella burgdorferi (strain ATCC 35210 / DSM 4680 / CIP 102532 / B31) (Borrelia burgdorferi).